A 537-amino-acid polypeptide reads, in one-letter code: uncharacterized protein (537 aa).

The segment at 10 to 56 (HHDVEPQNVEEEPPLTGQTIVTEDKLETSAKDKKHESPSMSEDEEGS) is disordered. Residues 31–46 (TEDKLETSAKDKKHES) are compositionally biased toward basic and acidic residues. The next 12 helical transmembrane spans lie at 90–110 (FVATVYTFLEVYVIWSSTACI), 133–153 (LFIVGNAFGPMLLGPMSDIFG), 156–176 (WVYVGSLILYIIFQIPQALAY), 180–200 (MMAINSAIAGAFGSSALANVA), 213–233 (GFGISLFVWGANAGASIGSPI), 243–263 (WFYWMNMIVGGFFVILCVLCP), 313–333 (PIIMALGLYNGFAYGLIFLYL), 348–368 (YMGANLTYLNFLVGVTIVVML), 393–413 (FLISLLTVWFFPAGLFWFAFT), 422–442 (SPLIAGGVLGVGDPQLWLAMI), 457–477 (IAAFTLPSFAIAAVLVHLGII), and 492–512 (AFISLSLVATIYVIYFFGHLI).

Belongs to the major facilitator superfamily. CAR1 family.

The protein resides in the endoplasmic reticulum. It localises to the golgi apparatus. Its subcellular location is the membrane. This is an uncharacterized protein from Schizosaccharomyces pombe (strain 972 / ATCC 24843) (Fission yeast).